The following is a 422-amino-acid chain: Adenylosuccinate synthetase (422 aa).

Residues 11–17 (GDEGKGK) and 39–41 (GHT) contribute to the GTP site. Catalysis depends on D12, which acts as the Proton acceptor. Residues D12 and G39 each contribute to the Mg(2+) site. IMP-binding positions include 12 to 15 (DEGK), 37 to 40 (NAGH), T129, R143, N219, T234, and R298. H40 (proton donor) is an active-site residue. 294–300 (VTTGRRR) contributes to the substrate binding site. GTP-binding positions include R300, 326-328 (KLD), and 409-411 (GTG).

The protein belongs to the adenylosuccinate synthetase family. As to quaternary structure, homodimer. Mg(2+) serves as cofactor.

It localises to the cytoplasm. It catalyses the reaction IMP + L-aspartate + GTP = N(6)-(1,2-dicarboxyethyl)-AMP + GDP + phosphate + 2 H(+). Its pathway is purine metabolism; AMP biosynthesis via de novo pathway; AMP from IMP: step 1/2. Plays an important role in the de novo pathway and in the salvage pathway of purine nucleotide biosynthesis. Catalyzes the first committed step in the biosynthesis of AMP from IMP. This chain is Adenylosuccinate synthetase, found in Ajellomyces capsulatus (strain NAm1 / WU24) (Darling's disease fungus).